The following is a 351-amino-acid chain: Probable aldo-keto reductase 2 (351 aa).

The Proton donor role is filled by Tyr67. His134 serves as a coordination point for substrate. NADP(+) is bound at residue 213-223 (SPLGRGFFSAG). A disordered region spans residues 317 to 351 (YASTDDVRGDRYPQAMANTTWQNSETPPLSSWKAQ). A compositionally biased stretch (polar residues) spans 332–351 (MANTTWQNSETPPLSSWKAQ).

It belongs to the aldo/keto reductase family.

The polypeptide is Probable aldo-keto reductase 2 (Oryza sativa subsp. japonica (Rice)).